Here is a 156-residue protein sequence, read N- to C-terminus: SsrA-binding protein (156 aa).

It belongs to the SmpB family.

The protein resides in the cytoplasm. Its function is as follows. Required for rescue of stalled ribosomes mediated by trans-translation. Binds to transfer-messenger RNA (tmRNA), required for stable association of tmRNA with ribosomes. tmRNA and SmpB together mimic tRNA shape, replacing the anticodon stem-loop with SmpB. tmRNA is encoded by the ssrA gene; the 2 termini fold to resemble tRNA(Ala) and it encodes a 'tag peptide', a short internal open reading frame. During trans-translation Ala-aminoacylated tmRNA acts like a tRNA, entering the A-site of stalled ribosomes, displacing the stalled mRNA. The ribosome then switches to translate the ORF on the tmRNA; the nascent peptide is terminated with the 'tag peptide' encoded by the tmRNA and targeted for degradation. The ribosome is freed to recommence translation, which seems to be the essential function of trans-translation. The polypeptide is SsrA-binding protein (Staphylococcus epidermidis (strain ATCC 35984 / DSM 28319 / BCRC 17069 / CCUG 31568 / BM 3577 / RP62A)).